We begin with the raw amino-acid sequence, 70 residues long: Neuropeptide SIFamide (70 aa).

The first 22 residues, 1–22 (MRFIVALCLFAIVMCIIHKAEG), serve as a signal peptide directing secretion. Phe34 bears the Phenylalanine amide mark. A propeptide spanning residues 38–70 (GVVEYDTTGRALSALCEIASETCQAWYQTLENK) is cleaved from the precursor.

In terms of tissue distribution, expressed in antennal lobe (AL) and gnathal ganglion (GNG) with expression detected in most animals (at protein level). Not expressed in corpora cardiaca (CC) and corpora allata (CA) (at protein level).

The protein resides in the secreted. In terms of biological role, ligand for the neuropeptide SIFamide receptor. The polypeptide is Neuropeptide SIFamide (Agrotis ipsilon (Black cutworm moth)).